The chain runs to 194 residues: uncharacterized protein (194 aa).

The disordered stretch occupies residues 62-93; that stretch reads GGAGRRTSKAQRVHPQPSHQRQPPPPQHPGPY.

Expressed most abundantly in the brain at protein level. Present in cortex, cerebellum and midbrain. Found in neurons. Elevated expressions detected in Alzheimer brain samples. Also expressed in testis.

It localises to the cytoplasm. This is an uncharacterized protein from Homo sapiens (Human).